A 675-amino-acid chain; its full sequence is UvrABC system protein B (675 aa).

Positions 30-417 (SGIEQGNRNQ…SDQIVEQVVR (388 aa)) constitute a Helicase ATP-binding domain. 43–50 (GVTGSGKT) serves as a coordination point for ATP. Residues 96-119 (YYDYYQPEAYVPSSDTFIEKDAAI) carry the Beta-hairpin motif. Residues 434-601 (QVDDVLSEIN…AVRQKVKEID (168 aa)) enclose the Helicase C-terminal domain. Residues 637–672 (AKHMSKLEKEMLKASKELQFEQAARLRDEILRLKAQ) enclose the UVR domain.

It belongs to the UvrB family. As to quaternary structure, forms a heterotetramer with UvrA during the search for lesions. Interacts with UvrC in an incision complex.

It is found in the cytoplasm. Functionally, the UvrABC repair system catalyzes the recognition and processing of DNA lesions. A damage recognition complex composed of 2 UvrA and 2 UvrB subunits scans DNA for abnormalities. Upon binding of the UvrA(2)B(2) complex to a putative damaged site, the DNA wraps around one UvrB monomer. DNA wrap is dependent on ATP binding by UvrB and probably causes local melting of the DNA helix, facilitating insertion of UvrB beta-hairpin between the DNA strands. Then UvrB probes one DNA strand for the presence of a lesion. If a lesion is found the UvrA subunits dissociate and the UvrB-DNA preincision complex is formed. This complex is subsequently bound by UvrC and the second UvrB is released. If no lesion is found, the DNA wraps around the other UvrB subunit that will check the other stand for damage. This is UvrABC system protein B from Acinetobacter baylyi (strain ATCC 33305 / BD413 / ADP1).